Reading from the N-terminus, the 238-residue chain is ATP-dependent dethiobiotin synthetase BioD (238 aa).

Residue 12–17 (EVGKTV) participates in ATP binding. Thr-16 contributes to the Mg(2+) binding site. Residue Lys-37 is part of the active site. Thr-41 contacts substrate. Residues Asp-50, 109–112 (EGAG), 170–171 (GS), and 200–202 (PAG) contribute to the ATP site. Asp-50 and Glu-109 together coordinate Mg(2+).

It belongs to the dethiobiotin synthetase family. As to quaternary structure, homodimer. The cofactor is Mg(2+).

It is found in the cytoplasm. The catalysed reaction is (7R,8S)-7,8-diammoniononanoate + CO2 + ATP = (4R,5S)-dethiobiotin + ADP + phosphate + 3 H(+). It functions in the pathway cofactor biosynthesis; biotin biosynthesis; biotin from 7,8-diaminononanoate: step 1/2. Its function is as follows. Catalyzes a mechanistically unusual reaction, the ATP-dependent insertion of CO2 between the N7 and N8 nitrogen atoms of 7,8-diaminopelargonic acid (DAPA, also called 7,8-diammoniononanoate) to form a ureido ring. This is ATP-dependent dethiobiotin synthetase BioD from Streptomyces coelicolor (strain ATCC BAA-471 / A3(2) / M145).